The primary structure comprises 526 residues: Acetyl-CoA hydrolase (526 aa).

N-acetylthreonine is present on Thr-2. 277–281 lines the CoA pocket; that stretch reads GIGNI. Glu-302 acts as the 5-glutamyl coenzyme A thioester intermediate in catalysis. Residue Ser-350 is modified to Phosphoserine. CoA-binding residues include Asn-392 and Gly-396.

This sequence belongs to the acetyl-CoA hydrolase/transferase family. Monomer. In terms of processing, glycosylated; contains mannose.

The protein localises to the cytoplasm. It carries out the reaction acetyl-CoA + H2O = acetate + CoA + H(+). In terms of biological role, presumably involved in regulating the intracellular acetyl-CoA pool for fatty acid and cholesterol synthesis and fatty acid oxidation. It may be involved in overall regulation of acetylation during melatonin synthesis. This chain is Acetyl-CoA hydrolase (ACH1), found in Saccharomyces cerevisiae (strain ATCC 204508 / S288c) (Baker's yeast).